Consider the following 838-residue polypeptide: MATEIITEKKEIVARTRSSGITFNPPVTHDMVRSLFDPTIKKSFLECCITLTILANFVLCYYLINWFGLSQAKLIFLIQYVYWRLAYNLGIGIILHYQSHYESLTKYANQNKLFKKESAKTNWIASFFQFEIKSKMPNDYNLHSYPDELNCWLLFRQFVDLILMQDFTTYIIYVYLSLPTDVSSLINWKSLIGIAMILFNIWVKIDAHRVVKDYAWYWGDFFFLQDAELTFDGVFNISPHPMYSIGYLGYYGLSLICGDYRVLLVSVGGHFLQFLFLKYVESPHIERTYGSDSPSNSTQHQIDDLIAKENYDYSRPLINTGILFENFQFLRFSDYFTVSTILVLFSWFFTSKPSNNFLFVLTLLTKLTTWLLTSWILFQQSNRKWFTRLFLKNGYTQIYSYQQWQFLYNYSLIVTNTLLFLHTLSELYSIQSSDGLNNSHVIFGLLLCAIQIWCNVETRDAISDFGWFYGDFFLTNYITTRKLTSQGIYRYLNNPEAILGVAGIWGSVLMTNFSKTNVTLAVLWTVTNLIFVKLIEEPHVSKVYGNGTRVSGVQQTLLALKPFRWISDLIDDWGNKMMKSLHGFDSDSDSESISSGKKGNLSSLKLSKKSKLKNRVQSDNKLAPNSKFEIEDLEDEIVYLPNSVTISWKLPISMFNEKDWIGLYNVLETGSDRTQTKIPSLGHWSAVDATGYPHDSINTNSITEFKKGSKNVSGRVTFDANLLYFKPGIYEFRYHSKNSHKVLLISSPFQISFPEFDNEAQVDIKNEIMKFLDAISCMKNEKYFANDNKYFTADAFSNYIKDSFGIELSTDYIRRVNGDVEVISRRVHDIKEVLDSLN.

Topologically, residues 1–48 are lumenal; sequence MATEIITEKKEIVARTRSSGITFNPPVTHDMVRSLFDPTIKKSFLECC. The chain crosses the membrane as a helical span at residues 49–69; it reads ITLTILANFVLCYYLINWFGL. Topologically, residues 70-73 are cytoplasmic; it reads SQAK. The helical transmembrane segment at 74–94 threads the bilayer; the sequence is LIFLIQYVYWRLAYNLGIGII. Residues 95-157 are Lumenal-facing; sequence LHYQSHYESL…ELNCWLLFRQ (63 aa). A helical membrane pass occupies residues 158-178; sequence FVDLILMQDFTTYIIYVYLSL. Residues 179 to 184 are Cytoplasmic-facing; the sequence is PTDVSS. Residues 185 to 205 traverse the membrane as a helical segment; it reads LINWKSLIGIAMILFNIWVKI. Residues 206 to 236 lie on the Lumenal side of the membrane; that stretch reads DAHRVVKDYAWYWGDFFFLQDAELTFDGVFN. Residues 237-257 traverse the membrane as a helical segment; that stretch reads ISPHPMYSIGYLGYYGLSLIC. Residues 258–261 lie on the Cytoplasmic side of the membrane; that stretch reads GDYR. The helical transmembrane segment at 262–282 threads the bilayer; the sequence is VLLVSVGGHFLQFLFLKYVES. Over 283–328 the chain is Lumenal; it reads PHIERTYGSDSPSNSTQHQIDDLIAKENYDYSRPLINTGILFENFQ. A helical transmembrane segment spans residues 329–349; sequence FLRFSDYFTVSTILVLFSWFF. Topologically, residues 350-356 are cytoplasmic; the sequence is TSKPSNN. The chain crosses the membrane as a helical span at residues 357-377; it reads FLFVLTLLTKLTTWLLTSWIL. Over 378 to 403 the chain is Lumenal; sequence FQQSNRKWFTRLFLKNGYTQIYSYQQ. A helical transmembrane segment spans residues 404–424; it reads WQFLYNYSLIVTNTLLFLHTL. Topologically, residues 425–435 are cytoplasmic; that stretch reads SELYSIQSSDG. A helical membrane pass occupies residues 436 to 456; that stretch reads LNNSHVIFGLLLCAIQIWCNV. The Lumenal portion of the chain corresponds to 457-517; the sequence is ETRDAISDFG…VLMTNFSKTN (61 aa). A helical membrane pass occupies residues 518–538; sequence VTLAVLWTVTNLIFVKLIEEP. The Cytoplasmic portion of the chain corresponds to 539 to 838; the sequence is HVSKVYGNGT…DIKEVLDSLN (300 aa).

The protein belongs to the class VI-like SAM-binding methyltransferase superfamily. CHO2 family.

The protein resides in the endoplasmic reticulum membrane. It carries out the reaction a 1,2-diacyl-sn-glycero-3-phosphoethanolamine + S-adenosyl-L-methionine = a 1,2-diacyl-sn-glycero-3-phospho-N-methylethanolamine + S-adenosyl-L-homocysteine + H(+). The protein operates within phospholipid metabolism; phosphatidylcholine biosynthesis. Catalyzes the first step of the methylation pathway of phosphatidylcholine biosynthesis, the SAM-dependent methylation of phosphatidylethanolamine (PE) to phosphatidylmonomethylethanolamine (PMME). The polypeptide is Phosphatidylethanolamine N-methyltransferase 1 (CHO2-1) (Vanderwaltozyma polyspora (strain ATCC 22028 / DSM 70294 / BCRC 21397 / CBS 2163 / NBRC 10782 / NRRL Y-8283 / UCD 57-17) (Kluyveromyces polysporus)).